Consider the following 315-residue polypeptide: MIEIEKVCVDFTAGRGTSGAGKSTLLRTLNALTRPSQGRVNVNGVEISALDGKALRQARQRIGMIFQHFNLMHTRTVAQNVAFSLKAAGWERSKIAPRVAEILTLVGLADKANRFPVQLSGGQKQRVGIARAIANHPDVLLCDEPTSALDLETSATILALLRQINAQLGITIVLITHEMNVIKSICDRVAVMSGGKVVESGEVFDEFAHPQHAFTQQLVSHTLNLTLPERLREHLPGQLLKILFIGDSAEQPVLSEVAIKFGVAVNILHGKIEYIGERALGILVVQLTAPHNPTAVAAAVEHIRQRTAQVEVIRG.

One can recognise an ABC transporter domain in the interval 2 to 219 (IEIEKVCVDF…PQHAFTQQLV (218 aa)). 16-23 (GTSGAGKS) is an ATP binding site.

Belongs to the ABC transporter superfamily. Methionine importer (TC 3.A.1.24) family. As to quaternary structure, the complex is composed of two ATP-binding proteins (MetN), two transmembrane proteins (MetI) and a solute-binding protein (MetQ).

The protein localises to the cell inner membrane. The catalysed reaction is L-methionine(out) + ATP + H2O = L-methionine(in) + ADP + phosphate + H(+). It catalyses the reaction D-methionine(out) + ATP + H2O = D-methionine(in) + ADP + phosphate + H(+). Its function is as follows. Part of the ABC transporter complex MetNIQ involved in methionine import. Responsible for energy coupling to the transport system. This is Methionine import ATP-binding protein MetN from Salmonella enteritidis.